The primary structure comprises 924 residues: Isoleucine--tRNA ligase (924 aa).

The short motif at 57 to 67 (PYANGDIHMGH) is the 'HIGH' region element. Position 552 (glutamate 552) interacts with L-isoleucyl-5'-AMP. The 'KMSKS' region signature appears at 593-597 (KMSKS). Lysine 596 is a binding site for ATP. Cysteine 891, cysteine 894, cysteine 911, and cysteine 914 together coordinate Zn(2+).

It belongs to the class-I aminoacyl-tRNA synthetase family. IleS type 1 subfamily. As to quaternary structure, monomer. Zn(2+) is required as a cofactor.

Its subcellular location is the cytoplasm. The enzyme catalyses tRNA(Ile) + L-isoleucine + ATP = L-isoleucyl-tRNA(Ile) + AMP + diphosphate. Functionally, catalyzes the attachment of isoleucine to tRNA(Ile). As IleRS can inadvertently accommodate and process structurally similar amino acids such as valine, to avoid such errors it has two additional distinct tRNA(Ile)-dependent editing activities. One activity is designated as 'pretransfer' editing and involves the hydrolysis of activated Val-AMP. The other activity is designated 'posttransfer' editing and involves deacylation of mischarged Val-tRNA(Ile). In Geobacillus thermodenitrificans (strain NG80-2), this protein is Isoleucine--tRNA ligase.